The primary structure comprises 338 residues: HTH-type transcriptional regulator SyrM 1 (338 aa).

An HTH lysR-type domain is found at 35–92 (LDLNTLLALEALLEHRNVTQAARHLGLSQPSVSRALIRLRGVFNDDLLVRGSSGMVPT). Positions 52–72 (VTQAARHLGLSQPSVSRALIR) form a DNA-binding region, H-T-H motif.

Belongs to the LysR transcriptional regulatory family.

Its function is as follows. Transcriptional activator that regulates the expression of genes involved in symbiosis. Among other targets it acts on the nolWBTUV operon. In Sinorhizobium fredii (strain NBRC 101917 / NGR234), this protein is HTH-type transcriptional regulator SyrM 1 (syrM1).